The following is an 805-amino-acid chain: Phosphoinositide 3-kinase adapter protein 1 (805 aa).

The TIR domain maps to 8–145 (RGCDILIVYS…AVKKAISEDS (138 aa)). A necessary and sufficient to mediate inhibition of NF-kappa-B downstream of activated TLRs; may mediate interaction with MYD88 and TIRAP region spans residues 10–144 (CDILIVYSPD…AAVKKAISED (135 aa)). Positions 145–165 (SGCDSVTDTEPEDEKVVSYSK) are disordered. A DBB domain is found at 181–317 (VQPDRIRCGA…NIPASGLHLF (137 aa)). Residue tyrosine 263 is modified to Phosphotyrosine. 3 positions are modified to phosphotyrosine; by SYK: tyrosine 419, tyrosine 444, and tyrosine 459. Residue tyrosine 513 is modified to Phosphotyrosine; by ABL1. The segment at 527-547 (ASRPPVPVPRPETTAPGAHQL) is disordered. Tyrosine 553 and tyrosine 570 each carry phosphotyrosine; by ABL1. A disordered region spans residues 571–590 (VSSESIRKGPPVRPWRDRPQ). The residue at position 594 (tyrosine 594) is a Phosphotyrosine; by ABL1. Serine 642 carries the post-translational modification Phosphoserine. Residues 645-667 (FQQENLKRLRDSITRRQREKQKS) adopt a coiled-coil conformation. A compositionally biased stretch (basic and acidic residues) spans 654–672 (RDSITRRQREKQKSGKQTD). A disordered region spans residues 654-679 (RDSITRRQREKQKSGKQTDLEITVPI). Tyrosine 694 is subject to Phosphotyrosine; by ABL1. Residues 697–805 (GPRKSVIPPR…PPPPVPPRGR (109 aa)) form a disordered region. Residues 707-716 (TELRRGDWKT) show a composition bias toward basic and acidic residues. A compositionally biased stretch (low complexity) spans 717-740 (DSTSSTASSTSNRSSTRSLLSVSS). Position 718 is a phosphoserine (serine 718). The span at 795-805 (HPPPPVPPRGR) shows a compositional bias: pro residues.

In terms of assembly, homooligomer. Interacts (phosphorylated on tyrosine residues within YXXM motifs) with PIK3R1 (via SH2 domain); required for BCR- and TLR-mediated activation of phosphoinositide 3-kinase. Interacts (via polyproline C-terminal region) with ABI1 (via SH3 domain); the interaction promotes phosphorylation of PIK3AP1 by ABL1. May interact with MYD88 and TIRAP. Constitutively phosphorylated. Phosphorylated on tyrosine residues in C-terminal region by ABL1. Phosphorylated on tyrosine residues within the YXXM motifs by BTK and SYK. Isoform 1 and isoform 2 are phosphorylated on tyrosine residues, most likely within the YXXM motifs, via CD19 activation. Toll-like receptor activation induces appearance of a phosphorylated form associated with membranes. Expressed in natural killer (NK) cells.

Its subcellular location is the cytoplasm. The protein resides in the cell membrane. In terms of biological role, signaling adapter that contributes to B-cell development by linking B-cell receptor (BCR) signaling to the phosphoinositide 3-kinase (PI3K)-Akt signaling pathway. Has a complementary role to the BCR coreceptor CD19, coupling BCR and PI3K activation by providing a docking site for the PI3K subunit PIK3R1. Alternatively, links Toll-like receptor (TLR) signaling to PI3K activation, a process preventing excessive inflammatory cytokine production. Also involved in the activation of PI3K in natural killer cells. May be involved in the survival of mature B-cells via activation of REL. The sequence is that of Phosphoinositide 3-kinase adapter protein 1 (PIK3AP1) from Homo sapiens (Human).